A 422-amino-acid chain; its full sequence is Glutamyl-tRNA reductase (422 aa).

Residues 50-53, Ser-110, 115-117, and Gln-121 each bind substrate; these read TCNR and ETQ. The active-site Nucleophile is Cys-51. Position 190 to 195 (190 to 195) interacts with NADP(+); sequence GAGEMS.

The protein belongs to the glutamyl-tRNA reductase family. Homodimer.

The catalysed reaction is (S)-4-amino-5-oxopentanoate + tRNA(Glu) + NADP(+) = L-glutamyl-tRNA(Glu) + NADPH + H(+). The protein operates within porphyrin-containing compound metabolism; protoporphyrin-IX biosynthesis; 5-aminolevulinate from L-glutamyl-tRNA(Glu): step 1/2. Functionally, catalyzes the NADPH-dependent reduction of glutamyl-tRNA(Glu) to glutamate 1-semialdehyde (GSA). The chain is Glutamyl-tRNA reductase from Campylobacter fetus subsp. fetus (strain 82-40).